Here is a 644-residue protein sequence, read N- to C-terminus: DNA mismatch repair protein MutL (644 aa).

Basic and acidic residues predominate over residues 340-360; that stretch reads KKEKDESVQEQFKFEHTKPRE. A disordered region spans residues 340-425; the sequence is KKEKDESVQE…ETVREEKEWT (86 aa). The span at 387 to 400 shows a compositional bias: low complexity; it reads QLWQPPKQEWQPPQ. Over residues 416-425 the composition is skewed to basic and acidic residues; that stretch reads ETVREEKEWT.

Belongs to the DNA mismatch repair MutL/HexB family.

In terms of biological role, this protein is involved in the repair of mismatches in DNA. It is required for dam-dependent methyl-directed DNA mismatch repair. May act as a 'molecular matchmaker', a protein that promotes the formation of a stable complex between two or more DNA-binding proteins in an ATP-dependent manner without itself being part of a final effector complex. This chain is DNA mismatch repair protein MutL, found in Bacillus mycoides (strain KBAB4) (Bacillus weihenstephanensis).